A 213-amino-acid chain; its full sequence is Ferric nitrobindin-like protein (213 aa).

Positions 17 to 42 (VNLAAEQSKSTSDKNLPEFGDMPIPD) are disordered. The GXWXGXG signature appears at 65 to 71 (GVWRGQG).

This sequence belongs to the nitrobindin family.

This Corynebacterium jeikeium (strain K411) protein is Ferric nitrobindin-like protein.